Consider the following 686-residue polypeptide: Eomesodermin homolog (686 aa).

Positions 27–46 (GGSGGSAGHLPSAAPSPQKL) are disordered. Positions 34–43 (GHLPSAAPSP) are enriched in low complexity. At serine 107 the chain carries Phosphoserine. Positions 276 to 456 (LWLKFHRHQT…HNPFAKGFRD (181 aa)) form a DNA-binding region, T-box. Positions 571–686 (AMAGWGGRGS…GGYYAFYTTP (116 aa)) are required for transcription activation. The tract at residues 639 to 686 (ACKRRRLSPSNSSNENSPSIKCEDINAEEYSKDTSKGMGGYYAFYTTP) is disordered. Over residues 646–657 (SPSNSSNENSPS) the composition is skewed to low complexity. Residues 659-673 (KCEDINAEEYSKDTS) show a composition bias toward basic and acidic residues.

In terms of tissue distribution, expressed in CD8+ T-cells.

The protein localises to the nucleus. Functions as a transcriptional activator playing a crucial role during development. Functions in trophoblast differentiation and later in gastrulation, regulating both mesoderm delamination and endoderm specification. Plays a role in brain development being required for the specification and the proliferation of the intermediate progenitor cells and their progeny in the cerebral cortex. Required for differentiation and migration of unipolar dendritic brush cells. Also involved in the differentiation of CD8+ T-cells during immune response regulating the expression of lytic effector genes. This chain is Eomesodermin homolog (EOMES), found in Homo sapiens (Human).